The following is a 501-amino-acid chain: Protein YLS7 (501 aa).

The helical; Signal-anchor for type II membrane protein transmembrane segment at 25 to 45 threads the bilayer; it reads IAFAIGGLTSFVIFASLLLFT. Positions 69–131 are disordered; sequence HSIHDPDRNP…NVSIDEEATQ (63 aa). Residues 78–89 are compositionally biased toward low complexity; sequence PSPVSSSESPPV. Residues 94-113 show a composition bias toward basic and acidic residues; the sequence is SDDKVLPKGSHDSNDVRLGE. Residues 114–124 are compositionally biased toward polar residues; that stretch reads ETNSGKSSNVS. Positions 211–213 match the GDS motif motif; that stretch reads GDS. Positions 438–467 are disordered; that stretch reads RHDGHPGPYRSPDPKKITKRGPDGQPPPQD. A compositionally biased stretch (basic and acidic residues) spans 449-459; sequence PDPKKITKRGP. The DCXHWCLPGXXDXWN motif signature appears at 467-481; the sequence is DCLHWCMPGPVDTWN.

Belongs to the PC-esterase family. TBL subfamily. As to expression, expressed in roots, cauline leaves and flowers.

Its subcellular location is the membrane. Functionally, may act as a bridging protein that binds pectin and other cell wall polysaccharides. Probably involved in maintaining esterification of pectins. May be involved in the specific O-acetylation of cell wall polymers. This is Protein YLS7 (YLS7) from Arabidopsis thaliana (Mouse-ear cress).